A 194-amino-acid chain; its full sequence is Protein GrpE (194 aa).

Residues 1 to 44 (MAEEKQNEELNEQEELNETEAETAEAEQTAAEADAPAEETQTEM) are disordered. Acidic residues predominate over residues 9–25 (ELNEQEELNETEAETAE).

The protein belongs to the GrpE family. As to quaternary structure, homodimer.

Its subcellular location is the cytoplasm. Participates actively in the response to hyperosmotic and heat shock by preventing the aggregation of stress-denatured proteins, in association with DnaK and GrpE. It is the nucleotide exchange factor for DnaK and may function as a thermosensor. Unfolded proteins bind initially to DnaJ; upon interaction with the DnaJ-bound protein, DnaK hydrolyzes its bound ATP, resulting in the formation of a stable complex. GrpE releases ADP from DnaK; ATP binding to DnaK triggers the release of the substrate protein, thus completing the reaction cycle. Several rounds of ATP-dependent interactions between DnaJ, DnaK and GrpE are required for fully efficient folding. This Bacillus licheniformis (strain ATCC 14580 / DSM 13 / JCM 2505 / CCUG 7422 / NBRC 12200 / NCIMB 9375 / NCTC 10341 / NRRL NRS-1264 / Gibson 46) protein is Protein GrpE.